The primary structure comprises 121 residues: uncharacterized protein (121 aa).

ATP is bound at residue 77-84; the sequence is AALSFGKT.

This is an uncharacterized protein from Saccharomyces cerevisiae (strain ATCC 204508 / S288c) (Baker's yeast).